The following is a 366-amino-acid chain: uncharacterized protein (366 aa).

The interval 1-135 (MNQTGRTIGG…PPKNVDTIDK (135 aa)) is disordered. Basic and acidic residues predominate over residues 26 to 38 (PSEDRVSSRDETP). Serine 69 bears the Phosphoserine mark. Phosphothreonine is present on threonine 76. Residue lysine 78 forms a Glycyl lysine isopeptide (Lys-Gly) (interchain with G-Cter in ubiquitin) linkage. A compositionally biased stretch (basic residues) spans 97 to 108 (QHNHHHHRRTSH). Lysine 187 participates in a covalent cross-link: Glycyl lysine isopeptide (Lys-Gly) (interchain with G-Cter in ubiquitin). A Phosphothreonine modification is found at threonine 189. Lysine 242 participates in a covalent cross-link: Glycyl lysine isopeptide (Lys-Gly) (interchain with G-Cter in ubiquitin). Phosphoserine occurs at positions 288 and 294. The tract at residues 313 to 366 (THSGHLEQKDVDDNRTSVPVTATQGSGHEDVVKKENTGNKLLRRVKSLKTSKKH) is disordered. Residues 316–327 (GHLEQKDVDDNR) show a composition bias toward basic and acidic residues. Residues 328-338 (TSVPVTATQGS) are compositionally biased toward polar residues. The segment covering 339–349 (GHEDVVKKENT) has biased composition (basic and acidic residues). Over residues 353 to 366 (LLRRVKSLKTSKKH) the composition is skewed to basic residues. A Phosphoserine modification is found at serine 359.

Belongs to the pal1 family.

The protein localises to the cytoplasm. It is found in the nucleus. This is an uncharacterized protein from Saccharomyces cerevisiae (strain ATCC 204508 / S288c) (Baker's yeast).